The chain runs to 409 residues: Tyrosine--tRNA ligase (409 aa).

Tyr39 is a binding site for L-tyrosine. The 'HIGH' region signature appears at Pro44–Ser53. Positions 176 and 180 each coordinate L-tyrosine. The short motif at Lys236–Thr240 is the 'KMSKS' region element. Lys239 contacts ATP. Residues Ile346–Ala409 form the S4 RNA-binding domain.

The protein belongs to the class-I aminoacyl-tRNA synthetase family. TyrS type 1 subfamily. In terms of assembly, homodimer.

It is found in the cytoplasm. The enzyme catalyses tRNA(Tyr) + L-tyrosine + ATP = L-tyrosyl-tRNA(Tyr) + AMP + diphosphate + H(+). Catalyzes the attachment of tyrosine to tRNA(Tyr) in a two-step reaction: tyrosine is first activated by ATP to form Tyr-AMP and then transferred to the acceptor end of tRNA(Tyr). The polypeptide is Tyrosine--tRNA ligase (Novosphingobium aromaticivorans (strain ATCC 700278 / DSM 12444 / CCUG 56034 / CIP 105152 / NBRC 16084 / F199)).